The sequence spans 380 residues: MKTKLNIKLYDEKLLWCTLCLLLIGVTMVTSSSIPIAYRIYHDMLFFTKKQILYLVILFFIFKIFLDVPISFWQKNNKIILLISISTLLLVLIIGNSIHGSLRWITISYVSMQPSELSKLAMFCYLSNYLSQKNSEIVNNFGGFLKPIIIISFPLILLLVEPDLGTTIVILLTTLSLLFISGTKIQKFIPTILIIVVTTTVLIIKSPYRFERIMSFWNPWNDPFGKGYQLTQSLMALGRGNIFGMGLGHSIQKLEYLPEAHTDFIFAIIGEELGYIGACTILFMIFFISFRAFKIGKIALKNKIFFSGYFAFSIGLWLIFQTLINVGTTIGLLPTKGLTLPLISYGGSSLIIVSIAIIILIRIDFELRMKNIQAFYKTDI.

The next 10 helical transmembrane spans lie at 14–34 (LLWC…SSSI), 52–72 (ILYL…PISF), 79–99 (IILL…NSIH), 112–131 (MQPS…NYLS), 141–161 (FGGF…LLVE), 162–182 (PDLG…FISG), 188–208 (FIPT…KSPY), 268–288 (IIGE…IFFI), 304–324 (IFFS…QTLI), and 341–361 (PLIS…IILI).

This sequence belongs to the SEDS family. FtsW subfamily.

Its subcellular location is the cell membrane. The enzyme catalyses [GlcNAc-(1-&gt;4)-Mur2Ac(oyl-L-Ala-gamma-D-Glu-L-Lys-D-Ala-D-Ala)](n)-di-trans,octa-cis-undecaprenyl diphosphate + beta-D-GlcNAc-(1-&gt;4)-Mur2Ac(oyl-L-Ala-gamma-D-Glu-L-Lys-D-Ala-D-Ala)-di-trans,octa-cis-undecaprenyl diphosphate = [GlcNAc-(1-&gt;4)-Mur2Ac(oyl-L-Ala-gamma-D-Glu-L-Lys-D-Ala-D-Ala)](n+1)-di-trans,octa-cis-undecaprenyl diphosphate + di-trans,octa-cis-undecaprenyl diphosphate + H(+). The protein operates within cell wall biogenesis; peptidoglycan biosynthesis. Functionally, peptidoglycan polymerase that is essential for cell division. This chain is Probable peptidoglycan glycosyltransferase FtsW, found in Buchnera aphidicola subsp. Baizongia pistaciae (strain Bp).